Here is a 368-residue protein sequence, read N- to C-terminus: tRNA-specific 2-thiouridylase MnmA (368 aa).

Residues 11–18 (GMSGGVDS) and M37 contribute to the ATP site. Residues 97 to 99 (NPD) are interaction with target base in tRNA. The active-site Nucleophile is the C102. C102 and C199 are joined by a disulfide. ATP is bound at residue G127. Residues 149 to 151 (KDQ) are interaction with tRNA. Catalysis depends on C199, which acts as the Cysteine persulfide intermediate. The interval 311–312 (RY) is interaction with tRNA.

Belongs to the MnmA/TRMU family. In terms of assembly, interacts with TusE.

The protein resides in the cytoplasm. It carries out the reaction S-sulfanyl-L-cysteinyl-[protein] + uridine(34) in tRNA + AH2 + ATP = 2-thiouridine(34) in tRNA + L-cysteinyl-[protein] + A + AMP + diphosphate + H(+). Catalyzes the 2-thiolation of uridine at the wobble position (U34) of tRNA(Lys), tRNA(Glu) and tRNA(Gln), leading to the formation of s(2)U34, the first step of tRNA-mnm(5)s(2)U34 synthesis. Sulfur is provided by IscS, via a sulfur-relay system. Binds ATP and its substrate tRNAs. The chain is tRNA-specific 2-thiouridylase MnmA from Escherichia coli (strain SMS-3-5 / SECEC).